The following is a 321-amino-acid chain: Probable cell division protein WhiA (321 aa).

The H-T-H motif DNA-binding region spans 276–309 (NLKELGELLEPPVGKSGVNHRLRKLEKIAEQLHQ).

This sequence belongs to the WhiA family.

In terms of biological role, involved in cell division and chromosome segregation. This chain is Probable cell division protein WhiA, found in Natranaerobius thermophilus (strain ATCC BAA-1301 / DSM 18059 / JW/NM-WN-LF).